A 212-amino-acid chain; its full sequence is dITP/XTP pyrophosphatase (212 aa).

7 to 12 (SNNAKK) provides a ligand contact to substrate. Mg(2+)-binding residues include E39 and D68. D68 acts as the Proton acceptor in catalysis. Residues S69, 165–168 (FGYD), K188, and 193–194 (HR) contribute to the substrate site.

This sequence belongs to the HAM1 NTPase family. As to quaternary structure, homodimer. It depends on Mg(2+) as a cofactor.

The catalysed reaction is XTP + H2O = XMP + diphosphate + H(+). It carries out the reaction dITP + H2O = dIMP + diphosphate + H(+). It catalyses the reaction ITP + H2O = IMP + diphosphate + H(+). Pyrophosphatase that catalyzes the hydrolysis of nucleoside triphosphates to their monophosphate derivatives, with a high preference for the non-canonical purine nucleotides XTP (xanthosine triphosphate), dITP (deoxyinosine triphosphate) and ITP. Seems to function as a house-cleaning enzyme that removes non-canonical purine nucleotides from the nucleotide pool, thus preventing their incorporation into DNA/RNA and avoiding chromosomal lesions. The chain is dITP/XTP pyrophosphatase from Leptothrix cholodnii (strain ATCC 51168 / LMG 8142 / SP-6) (Leptothrix discophora (strain SP-6)).